Here is a 459-residue protein sequence, read N- to C-terminus: Inositol-trisphosphate 3-kinase A (459 aa).

The interval 1–29 (MTLPGRPTGMARPRGAGPCSPGLERAPRR) is disordered. An omega-N-methylarginine mark is found at Arg-35, Arg-55, and Arg-62. The interval 49 to 164 (AAAGEPRARG…TSEDVGQKSH (116 aa)) is disordered. A compositionally biased stretch (low complexity) spans 116-132 (RRLSTSSLSSTGSSSLL). A phosphoserine mark is found at Ser-135 and Ser-195. Residues Ser-195, Lys-207, 247-249 (QDL), and Asp-260 contribute to the ATP site. Substrate is bound by residues Lys-262 and Arg-283. The interval 285–293 (DMYKKMLAV) is calmodulin-binding. Substrate is bound at residue 310–317 (KPRYMQWR). ATP is bound by residues Lys-334 and Asp-414. Position 417 (Lys-417) interacts with substrate.

This sequence belongs to the inositol phosphokinase (IPK) family.

Its subcellular location is the cytoplasm. It localises to the cytoskeleton. It carries out the reaction 1D-myo-inositol 1,4,5-trisphosphate + ATP = 1D-myo-inositol 1,3,4,5-tetrakisphosphate + ADP + H(+). Its activity is regulated as follows. Activated by calcium/calmodulin. In terms of biological role, catalyzes the phosphorylation of 1D-myo-inositol 1,4,5-trisphosphate (InsP3) into 1D-myo-inositol 1,3,4,5-tetrakisphosphate and participates to the regulation of calcium homeostasis. The chain is Inositol-trisphosphate 3-kinase A from Mus musculus (Mouse).